Here is a 479-residue protein sequence, read N- to C-terminus: B-cell CLL/lymphoma 6 member B protein (479 aa).

Positions 38–105 (TDVTLLVGGQ…MYTSRLRLSP (68 aa)) constitute a BTB domain. Disordered stretches follow at residues 143–190 (RPLE…PDPK) and 210–259 (GSLV…LSPT). The segment covering 147-160 (AEPPTPPTAPPPGS) has biased composition (pro residues). Over residues 162–172 (RRSEGHPDPPT) the composition is skewed to basic and acidic residues. The segment covering 234 to 244 (SSSSSSSSSSS) has biased composition (low complexity). 5 consecutive C2H2-type zinc fingers follow at residues 328–350 (YKCQLCRSSFRYKGNLASHRTVH), 356–378 (YHCSICGARFNRPANLKTHSRIH), 384–406 (YKCETCGSRFVQVAHLRAHVLIH), 412–434 (YPCPTCGTRFRHLQTLKSHVRIH), and 440–463 (YHCDPCGLHFRHKSQLRLHLRQKH).

In terms of assembly, associates with BCL6 through the BTB domain. Ubiquitously expressed with higher expression found in heart and placenta.

Its subcellular location is the nucleus. In terms of biological role, acts as a sequence-specific transcriptional repressor in association with BCL6. May function in a narrow stage or be related to some events in the early B-cell development. This chain is B-cell CLL/lymphoma 6 member B protein (BCL6B), found in Homo sapiens (Human).